Here is a 253-residue protein sequence, read N- to C-terminus: Type III pantothenate kinase (253 aa).

6 to 13 (DVGNTNTV) contacts ATP. A substrate-binding site is contributed by 103-106 (GADR). Aspartate 105 (proton acceptor) is an active-site residue. Aspartate 125 serves as a coordination point for K(+). Threonine 128 serves as a coordination point for ATP. Residue threonine 180 participates in substrate binding.

It belongs to the type III pantothenate kinase family. Homodimer. It depends on NH4(+) as a cofactor. Requires K(+) as cofactor.

It is found in the cytoplasm. The catalysed reaction is (R)-pantothenate + ATP = (R)-4'-phosphopantothenate + ADP + H(+). It functions in the pathway cofactor biosynthesis; coenzyme A biosynthesis; CoA from (R)-pantothenate: step 1/5. In terms of biological role, catalyzes the phosphorylation of pantothenate (Pan), the first step in CoA biosynthesis. This chain is Type III pantothenate kinase, found in Parafrankia sp. (strain EAN1pec).